Reading from the N-terminus, the 224-residue chain is UPF0173 metal-dependent hydrolase EF_1371 (224 aa).

This sequence belongs to the UPF0173 family.

The sequence is that of UPF0173 metal-dependent hydrolase EF_1371 from Enterococcus faecalis (strain ATCC 700802 / V583).